Reading from the N-terminus, the 374-residue chain is Lipoyl synthase, mitochondrial (374 aa).

The transit peptide at 1 to 19 (MHSRSALLYRFLRPASRCF) directs the protein to the mitochondrion. Cys-103, Cys-108, Cys-114, Cys-134, Cys-138, Cys-141, and Ser-350 together coordinate [4Fe-4S] cluster. The Radical SAM core domain occupies 119–339 (ETGTATATIM…RLLGMEMGFR (221 aa)).

Belongs to the radical SAM superfamily. Lipoyl synthase family. [4Fe-4S] cluster is required as a cofactor. As to expression, expressed in leaves and flowers, but not in roots. Expressed in roots, rosette leaves, cauline leaves, stems, flowers and siliques.

It localises to the mitochondrion. The enzyme catalyses [[Fe-S] cluster scaffold protein carrying a second [4Fe-4S](2+) cluster] + N(6)-octanoyl-L-lysyl-[protein] + 2 oxidized [2Fe-2S]-[ferredoxin] + 2 S-adenosyl-L-methionine + 4 H(+) = [[Fe-S] cluster scaffold protein] + N(6)-[(R)-dihydrolipoyl]-L-lysyl-[protein] + 4 Fe(3+) + 2 hydrogen sulfide + 2 5'-deoxyadenosine + 2 L-methionine + 2 reduced [2Fe-2S]-[ferredoxin]. It participates in protein modification; protein lipoylation via endogenous pathway; protein N(6)-(lipoyl)lysine from octanoyl-[acyl-carrier-protein]: step 2/2. Functionally, catalyzes the radical-mediated insertion of two sulfur atoms into the C-6 and C-8 positions of the octanoyl moiety bound to the lipoyl domains of lipoate-dependent enzymes, thereby converting the octanoylated domains into lipoylated derivatives. Together with LIP2 is essential for mitochondrial protein lipoylation during seed development. Required for the lipoylation of mitochondrial pyruvate dehydrogenase component E2 proteins in leaves and roots. The protein is Lipoyl synthase, mitochondrial of Arabidopsis thaliana (Mouse-ear cress).